Here is a 91-residue protein sequence, read N- to C-terminus: Putative defective replication initiation protein (91 aa).

The polypeptide is Putative defective replication initiation protein (repA1) (Escherichia coli (strain K12)).